The primary structure comprises 422 residues: Elongation factor 1-gamma (422 aa).

Residues 1–82 (MALVLHAGKT…YVARLKADNP (82 aa)) enclose the GST N-terminal domain. The region spanning 87–215 (SLIDYAHIEQ…VKQTESVPPV (129 aa)) is the GST C-terminal domain. The segment at 210–269 (ESVPPVPSAKKPSQPKETKSKAKEEPKKEAKKEPAKPKAEAAEEVEEAPKPKPKNPLDLL) is disordered. A compositionally biased stretch (basic and acidic residues) spans 223–250 (QPKETKSKAKEEPKKEAKKEPAKPKAEA). Positions 262-422 (PKNPLDLLPP…EALLDAKCFK (161 aa)) constitute an EF-1-gamma C-terminal domain.

In terms of assembly, EF-1 is composed of four subunits: alpha, beta, delta, and gamma.

Its function is as follows. Probably plays a role in anchoring the complex to other cellular components. In Prunus avium (Cherry), this protein is Elongation factor 1-gamma.